A 420-amino-acid polypeptide reads, in one-letter code: Serine hydroxymethyltransferase (420 aa).

(6S)-5,6,7,8-tetrahydrofolate-binding positions include Leu121 and Gly125 to Leu127. The residue at position 230 (Lys230) is an N6-(pyridoxal phosphate)lysine. Residues Glu246 and Ser354 to Phe356 contribute to the (6S)-5,6,7,8-tetrahydrofolate site.

It belongs to the SHMT family. In terms of assembly, homodimer. Requires pyridoxal 5'-phosphate as cofactor.

It localises to the cytoplasm. It catalyses the reaction (6R)-5,10-methylene-5,6,7,8-tetrahydrofolate + glycine + H2O = (6S)-5,6,7,8-tetrahydrofolate + L-serine. The protein operates within one-carbon metabolism; tetrahydrofolate interconversion. Its pathway is amino-acid biosynthesis; glycine biosynthesis; glycine from L-serine: step 1/1. Its function is as follows. Catalyzes the reversible interconversion of serine and glycine with tetrahydrofolate (THF) serving as the one-carbon carrier. This reaction serves as the major source of one-carbon groups required for the biosynthesis of purines, thymidylate, methionine, and other important biomolecules. Also exhibits THF-independent aldolase activity toward beta-hydroxyamino acids, producing glycine and aldehydes, via a retro-aldol mechanism. In Rickettsia peacockii (strain Rustic), this protein is Serine hydroxymethyltransferase.